We begin with the raw amino-acid sequence, 355 residues long: S-methyl-5'-thioadenosine phosphorylase (355 aa).

Residues threonine 45, 91-92, and 124-125 each bind phosphate; these read RH and SA. Methionine 226 is a binding site for substrate. Phosphate is bound at residue serine 227. Substrate is bound at residue 250–252; that stretch reads DYD.

Belongs to the PNP/MTAP phosphorylase family. MTAP subfamily. Homotrimer.

The protein localises to the cytoplasm. The protein resides in the nucleus. It catalyses the reaction S-methyl-5'-thioadenosine + phosphate = 5-(methylsulfanyl)-alpha-D-ribose 1-phosphate + adenine. It participates in amino-acid biosynthesis; L-methionine biosynthesis via salvage pathway; S-methyl-5-thio-alpha-D-ribose 1-phosphate from S-methyl-5'-thioadenosine (phosphorylase route): step 1/1. Functionally, catalyzes the reversible phosphorylation of S-methyl-5'-thioadenosine (MTA) to adenine and 5-methylthioribose-1-phosphate. Involved in the breakdown of MTA, a major by-product of polyamine biosynthesis. Responsible for the first step in the methionine salvage pathway after MTA has been generated from S-adenosylmethionine. Has broad substrate specificity with 6-aminopurine nucleosides as preferred substrates. This chain is S-methyl-5'-thioadenosine phosphorylase, found in Emericella nidulans (strain FGSC A4 / ATCC 38163 / CBS 112.46 / NRRL 194 / M139) (Aspergillus nidulans).